A 97-amino-acid polypeptide reads, in one-letter code: uncharacterized protein (97 aa).

The tract at residues 38–97 (TSPPDWNKFSGKVSINEPTTSKSKSKSTSTSTSTSTSTSTSTSTSSSTSSTSSTTSSINK) is disordered. The segment covering 56–97 (TTSKSKSKSTSTSTSTSTSTSTSTSTSSSTSSTSSTTSSINK) has biased composition (low complexity).

This is an uncharacterized protein from Dictyostelium discoideum (Social amoeba).